We begin with the raw amino-acid sequence, 516 residues long: MALSQATPFSATELLLASATFCLVFWVVKAWQPRVPKGLKSPPGPWSWPLIGHVLTLGKSPHLALSRLSQRYGDVLQIRIGCTPVLVLSGLDTIRQALVRQGDDFKGRPDLYSFTLVADGQSMTFNPDSGPVWAAQRRLAQNALNSFSVASDPASSSSCYLEMHVSKEAEALIGKFQELMAGSGRFDPYDHVVVSVAKVIGAMCFGQHFPQSSGEMVSLVRNTHDFVETASSGSPVDFFPILKYLPNPALQKYKSFNRRFLQFLWKMVQEHHQDFDKNRVQDIVGALFKHYEDNSRASGGLMPQKKTVNLVNDIFAAGFDPITTAISWSLLYLVTNPEIQRKIQQELDTVIGRARRPRLSDRSQLPYLEAFILETFRHSSFVPFTIPHSTIRDTTLNGFYIPKELCVFINQWQVNHDPKLWGDPSEFRPERFLTSHDTTISKTLSEKVMLFGMGKRRCIGEVLAKWEIFLFLAILLQQLEFSVPPGVKVDLTPTYGLTMKPAPCEHVQARLRFPIK.

Serine 69 carries O-linked (GlcNAc) serine glycosylation. Phenylalanine 226 is a binding site for substrate. Cysteine 458 lines the heme pocket.

It belongs to the cytochrome P450 family. In terms of assembly, interacts with PGRMC1; the interaction requires PGRMC1 homodimerization. The cofactor is heme.

It localises to the endoplasmic reticulum membrane. The protein resides in the microsome membrane. It carries out the reaction an organic molecule + reduced [NADPH--hemoprotein reductase] + O2 = an alcohol + oxidized [NADPH--hemoprotein reductase] + H2O + H(+). The enzyme catalyses 17beta-estradiol + reduced [NADPH--hemoprotein reductase] + O2 = 2-hydroxy-17beta-estradiol + oxidized [NADPH--hemoprotein reductase] + H2O + H(+). The catalysed reaction is 17beta-estradiol + reduced [NADPH--hemoprotein reductase] + O2 = 4-hydroxy-17beta-estradiol + oxidized [NADPH--hemoprotein reductase] + H2O + H(+). It catalyses the reaction estrone + reduced [NADPH--hemoprotein reductase] + O2 = 2-hydroxyestrone + oxidized [NADPH--hemoprotein reductase] + H2O + H(+). It carries out the reaction estrone + reduced [NADPH--hemoprotein reductase] + O2 = 4-hydroxyestrone + oxidized [NADPH--hemoprotein reductase] + H2O + H(+). The enzyme catalyses cholesterol + reduced [NADPH--hemoprotein reductase] + O2 = 25-hydroxycholesterol + oxidized [NADPH--hemoprotein reductase] + H2O + H(+). The catalysed reaction is all-trans-retinol + reduced [NADPH--hemoprotein reductase] + O2 = all-trans-retinal + oxidized [NADPH--hemoprotein reductase] + 2 H2O + H(+). It catalyses the reaction all-trans-retinal + reduced [NADPH--hemoprotein reductase] + O2 = all-trans-retinoate + oxidized [NADPH--hemoprotein reductase] + H2O + 2 H(+). It carries out the reaction (5Z,8Z,11Z,14Z)-eicosatetraenoate + reduced [NADPH--hemoprotein reductase] + O2 = (14R,15S)-epoxy-(5Z,8Z,11Z)-eicosatrienoate + oxidized [NADPH--hemoprotein reductase] + H2O + H(+). The enzyme catalyses (5Z,8Z,11Z,14Z)-eicosatetraenoate + reduced [NADPH--hemoprotein reductase] + O2 = (14S,15R)-epoxy-(5Z,8Z,11Z)-eicosatrienoate + oxidized [NADPH--hemoprotein reductase] + H2O + H(+). The catalysed reaction is (5Z,8Z,11Z,14Z,17Z)-eicosapentaenoate + reduced [NADPH--hemoprotein reductase] + O2 = (17R,18S)-epoxy-(5Z,8Z,11Z,14Z)-eicosatetraenoate + oxidized [NADPH--hemoprotein reductase] + H2O + H(+). It catalyses the reaction (4Z,7Z,10Z,13Z,16Z,19Z)-docosahexaenoate + reduced [NADPH--hemoprotein reductase] + O2 = (19R,20S)-epoxy-(4Z,7Z,10Z,13Z,16Z)-docosapentaenoate + oxidized [NADPH--hemoprotein reductase] + H2O + H(+). It carries out the reaction (5S)-hydroperoxy-(6E,8Z,11Z,14Z)-eicosatetraenoate = 5-oxo-(6E,8Z,11Z,14Z)-eicosatetraenoate + H2O. The enzyme catalyses (12S)-hydroperoxy-(5Z,8Z,10E,14Z)-eicosatetraenoate = 12-oxo-(5Z,8Z,10E,14Z)-eicosatetraenoate + H2O. The catalysed reaction is (15S)-hydroperoxy-(5Z,8Z,11Z,13E)-eicosatetraenoate = 15-oxo-(5Z,8Z,11Z,13E)-eicosatetraenoate + H2O. It catalyses the reaction (13S)-hydroperoxy-(9Z,11E)-octadecadienoate = 13-oxo-(9Z,11E)-octadecadienoate + H2O. It carries out the reaction (5Z,8Z,11Z,14Z)-eicosatetraenoate + reduced [NADPH--hemoprotein reductase] + O2 = 13-hydroxy-(5Z,8Z,11Z,14Z)-eicosatetraenoate + oxidized [NADPH--hemoprotein reductase] + H2O + H(+). The enzyme catalyses (5Z,8Z,11Z,14Z)-eicosatetraenoate + reduced [NADPH--hemoprotein reductase] + O2 = 19-hydroxy-(5Z,8Z,11Z,14Z)-eicosatetraenoate + oxidized [NADPH--hemoprotein reductase] + H2O + H(+). The catalysed reaction is (9Z,12Z)-octadecadienoate + reduced [NADPH--hemoprotein reductase] + O2 = 11-hydroxy-(9Z,12Z)-octadecadienoate + oxidized [NADPH--hemoprotein reductase] + H2O + H(+). It participates in cofactor metabolism; retinol metabolism. Its pathway is steroid metabolism; cholesterol metabolism. It functions in the pathway lipid metabolism; arachidonate metabolism. A cytochrome P450 monooxygenase involved in the metabolism of various endogenous substrates, including fatty acids, steroid hormones and vitamins. Mechanistically, uses molecular oxygen inserting one oxygen atom into a substrate, and reducing the second into a water molecule, with two electrons provided by NADPH via cytochrome P450 reductase (NADPH--hemoprotein reductase). Catalyzes the hydroxylation of carbon-hydrogen bonds. Exhibits high catalytic activity for the formation of hydroxyestrogens from estrone (E1) and 17beta-estradiol (E2), namely 2-hydroxy E1 and E2. Metabolizes cholesterol toward 25-hydroxycholesterol, a physiological regulator of cellular cholesterol homeostasis. May act as a major enzyme for all-trans retinoic acid biosynthesis in the liver. Catalyzes two successive oxidative transformation of all-trans retinol to all-trans retinal and then to the active form all-trans retinoic acid. Primarily catalyzes stereoselective epoxidation of the last double bond of polyunsaturated fatty acids (PUFA), displaying a strong preference for the (R,S) stereoisomer. Catalyzes bisallylic hydroxylation and omega-1 hydroxylation of PUFA. May also participate in eicosanoids metabolism by converting hydroperoxide species into oxo metabolites (lipoxygenase-like reaction, NADPH-independent). Plays a role in the oxidative metabolism of xenobiotics. Catalyzes the N-hydroxylation of heterocyclic amines and the O-deethylation of phenacetin. Metabolizes caffeine via N3-demethylation. In Balaenoptera acutorostrata (Common minke whale), this protein is Cytochrome P450 1A2 (CYP1A2).